A 553-amino-acid polypeptide reads, in one-letter code: Thermosome subunit beta (553 aa).

Residues Lys534–Asp553 are disordered.

It belongs to the TCP-1 chaperonin family. In terms of assembly, forms a Heterooligomeric complex of two stacked eight-membered rings.

Its function is as follows. Molecular chaperone; binds unfolded polypeptides in vitro, and has a weak ATPase activity. This is Thermosome subunit beta (thsB) from Sulfolobus acidocaldarius (strain ATCC 33909 / DSM 639 / JCM 8929 / NBRC 15157 / NCIMB 11770).